The sequence spans 406 residues: MEEQQLGAALDKSAAELSVMDVYDIAAALGLELERVIERTGAELLSRLVPRVVRVLELLEVLVSRSSSSPDTDELRLELDRLRLERLERLEKEKKHKKELELVEDVWRGEAQDLLCQISQLQEENKTLLNNLSIRESPLTEEDIQKQEGMTERERQVMKKLKEVVDKQRDEIRAKDRELTLKNDDVEALQQQMSRLMKINQDVRHRVSVVEAQGKSLIQQKVELEAAAQTQQQEVSSLRQEVSRLKEKLKEQSRSNEEEAQEPVGPPSPAQEALCDEDLSTVDLKDPNRPRFTLQELRDVLHERNELKAKVFMLQEEIAYYRSEEQEEENGPPLPDPSETLRTNPRSNFQPESGIKRLFSFFSRDRSVSQRRMMLNVEPVGDAVGSWTGKQEDVYTETAQEALQHM.

The RH1 domain maps to 5–99; that stretch reads QLGAALDKSA…LEKEKKHKKE (95 aa). The stretch at 105–319 forms a coiled coil; sequence DVWRGEAQDL…KVFMLQEEIA (215 aa). Disordered regions lie at residues 234-272 and 323-351; these read EVSS…PAQE and SEEQ…NFQP. The segment covering 241–257 has biased composition (basic and acidic residues); the sequence is EVSRLKEKLKEQSRSNE. An RH2 domain is found at 289–358; sequence RPRFTLQELR…FQPESGIKRL (70 aa). Over residues 340–351 the composition is skewed to polar residues; the sequence is TLRTNPRSNFQP.

Belongs to the RILPL family.

It localises to the cytoplasm. The protein localises to the cytosol. It is found in the cytoskeleton. The protein resides in the microtubule organizing center. Its subcellular location is the centrosome. It localises to the cell projection. The protein localises to the cilium. Plays a role in the regulation of cell shape and polarity. Plays a role in cellular protein transport, including protein transport away from primary cilia. Neuroprotective protein. The chain is RILP-like protein 1 (rilpl1) from Danio rerio (Zebrafish).